A 57-amino-acid polypeptide reads, in one-letter code: MAKKKGEGPGLMSSAGLMRYFESEETSIKLDPKMVIGAGIASGVAIMALNITFGLWP.

Over 1–31 (MAKKKGEGPGLMSSAGLMRYFESEETSIKLD) the chain is Cytoplasmic. Residues 32–53 (PKMVIGAGIASGVAIMALNITF) form a helical membrane-spanning segment. Residues 54-57 (GLWP) are Extracellular-facing.

This sequence belongs to the SEC61-beta family. Component of the protein translocase complex. Heterotrimer consisting of alpha (SecY), beta (SecG) and gamma (SecE) subunits. Can form oligomers of the heterotrimer.

The protein localises to the cell membrane. In terms of biological role, involved in protein export. The function of the beta subunit is unknown, but it may be involved in stabilization of the trimeric complex. In Methanothrix thermoacetophila (strain DSM 6194 / JCM 14653 / NBRC 101360 / PT) (Methanosaeta thermophila), this protein is Preprotein translocase subunit SecG.